Consider the following 220-residue polypeptide: uncharacterized protein (220 aa).

The tract at residues 196–220 (KDDNSKDDNNDSEDLSKQIDNLKLD) is disordered.

This is an uncharacterized protein from Invertebrate iridescent virus 6 (IIV-6).